A 219-amino-acid chain; its full sequence is 23.6 kDa heat shock protein, mitochondrial (219 aa).

Residues 1–29 constitute a mitochondrion transit peptide; sequence MALARQCLSKRLAAGCALARPLHAASPVA. One can recognise a sHSP domain in the interval 104–219; it reads QVAETLTRPL…KRSVTEVKVR (116 aa).

It belongs to the small heat shock protein (HSP20) family. As to quaternary structure, may form oligomeric structures.

The protein localises to the mitochondrion. This chain is 23.6 kDa heat shock protein, mitochondrial (HSP23.6), found in Oryza sativa subsp. japonica (Rice).